The sequence spans 143 residues: Hemoglobin subunit alpha (143 aa).

Position 2 is an N-acetylserine (Ser-2). Positions Ser-2 to Arg-143 constitute a Globin domain. An O2-binding site is contributed by His-60. His-89 provides a ligand contact to heme b.

It belongs to the globin family. As to quaternary structure, heterotetramer of two alpha chains and two beta chains. In terms of tissue distribution, red blood cells.

Its function is as follows. Involved in oxygen transport from the lung to the various peripheral tissues. The chain is Hemoglobin subunit alpha (hba) from Artedidraco orianae (Barbeled plunderfish).